The following is a 208-amino-acid chain: Imidazoleglycerol-phosphate dehydratase (208 aa).

Positions 1 to 22 (MTEDTETSSTGAGADDRTAAIS) are disordered.

It belongs to the imidazoleglycerol-phosphate dehydratase family.

Its subcellular location is the cytoplasm. It catalyses the reaction D-erythro-1-(imidazol-4-yl)glycerol 3-phosphate = 3-(imidazol-4-yl)-2-oxopropyl phosphate + H2O. The protein operates within amino-acid biosynthesis; L-histidine biosynthesis; L-histidine from 5-phospho-alpha-D-ribose 1-diphosphate: step 6/9. The polypeptide is Imidazoleglycerol-phosphate dehydratase (Haloquadratum walsbyi (strain DSM 16790 / HBSQ001)).